A 336-amino-acid polypeptide reads, in one-letter code: Nucleoid-associated protein ECA2747 (336 aa).

Residues 317–336 (KGTPPNLRDQLQRRTSGGKQ) are disordered.

This sequence belongs to the YejK family.

Its subcellular location is the cytoplasm. It localises to the nucleoid. This chain is Nucleoid-associated protein ECA2747, found in Pectobacterium atrosepticum (strain SCRI 1043 / ATCC BAA-672) (Erwinia carotovora subsp. atroseptica).